We begin with the raw amino-acid sequence, 167 residues long: Transcriptional repressor NrdR (167 aa).

The segment at 3–34 (CPFCRNPDSRVVDSRMADDGSAIRRRRQCPEC) is a zinc-finger region. The ATP-cone domain occupies 46-136 (LSVIKRSGVG…VYQAFESLED (91 aa)). The interval 148-167 (AQEDAAERPATPRKPEKTSL) is disordered.

Belongs to the NrdR family. It depends on Zn(2+) as a cofactor.

In terms of biological role, negatively regulates transcription of bacterial ribonucleotide reductase nrd genes and operons by binding to NrdR-boxes. The protein is Transcriptional repressor NrdR of Pseudarthrobacter chlorophenolicus (strain ATCC 700700 / DSM 12829 / CIP 107037 / JCM 12360 / KCTC 9906 / NCIMB 13794 / A6) (Arthrobacter chlorophenolicus).